The primary structure comprises 151 residues: uncharacterized protein (151 aa).

This is an uncharacterized protein from Mycoplasma genitalium (strain ATCC 33530 / DSM 19775 / NCTC 10195 / G37) (Mycoplasmoides genitalium).